The primary structure comprises 215 residues: Probable transaldolase (215 aa).

The Schiff-base intermediate with substrate role is filled by lysine 83.

This sequence belongs to the transaldolase family. Type 3B subfamily.

Its subcellular location is the cytoplasm. It catalyses the reaction D-sedoheptulose 7-phosphate + D-glyceraldehyde 3-phosphate = D-erythrose 4-phosphate + beta-D-fructose 6-phosphate. The protein operates within carbohydrate degradation; pentose phosphate pathway; D-glyceraldehyde 3-phosphate and beta-D-fructose 6-phosphate from D-ribose 5-phosphate and D-xylulose 5-phosphate (non-oxidative stage): step 2/3. Functionally, transaldolase is important for the balance of metabolites in the pentose-phosphate pathway. In Methanococcus maripaludis (strain DSM 14266 / JCM 13030 / NBRC 101832 / S2 / LL), this protein is Probable transaldolase.